The sequence spans 321 residues: Basic peroxidase (321 aa).

The first 30 residues, 1 to 30 (MSYHKSSGTTLMVPLFMLLISVNYFMSCNA), serve as a signal peptide directing secretion. Residue Q31 is modified to Pyrrolidone carboxylic acid. Cystine bridges form between C41/C117, C74/C79, C123/C317, and C202/C228. The active-site Proton acceptor is the H72. Positions 73, 76, 78, 80, and 82 each coordinate Ca(2+). Residue P165 coordinates substrate. Residue H195 participates in heme b binding. T196 is a binding site for Ca(2+). N211 and N221 each carry an N-linked (GlcNAc...) asparagine glycan. Residues D241, T244, and D249 each contribute to the Ca(2+) site.

Belongs to the peroxidase family. Classical plant (class III) peroxidase subfamily. Heme b serves as cofactor. It depends on Ca(2+) as a cofactor. In terms of processing, N-glycosylated. As to expression, expressed in tracheary elements, roots, young and old hypocotyls, and stems in the partially glycosylated form and in roots and young hypocotyls in the fully glycosylated form. None of the isoforms is significantly expressed in leaves or cotyledons.

Its subcellular location is the secreted. The catalysed reaction is 2 a phenolic donor + H2O2 = 2 a phenolic radical donor + 2 H2O. In terms of biological role, removal of H(2)O(2), oxidation of toxic reductants, biosynthesis and degradation of lignin, suberization, auxin catabolism, response to environmental stresses such as wounding, pathogen attack and oxidative stress. These functions might be dependent on each isozyme/isoform in each plant tissue. Involved in the synthesis of highly polymerized lignins. The sequence is that of Basic peroxidase (POD3) from Zinnia elegans (Garden zinnia).